A 370-amino-acid polypeptide reads, in one-letter code: MDFPASENLFPGPVLGIETSCDETAAAVLDGSGRILAEIVLSQYDDHARFGGVVPEIAARAHLAYLPGMVTEVMDKAGLRFQDLAAIAATSGPGLIGGLLVGAGLGKGLALAAKRPFIAINHLEAHALAALLPALGGVAEITSGEHFPFLLMLLSGGHCQCILVEGVGRYRRLGGTIDDAVGEAFDKVGKLLGLGWPGGPALERLALQGNPHALAFPRPMKGRVGCDFSFSGLKTAVAQYVARFPDGPLPLSDAADIAASFQAAVADVMADRATAALAMADEIAPAKMLVVSGGVAANAAIRAALSTAAEHRGIAMLAPPPRLCTDNAVMVAWAGLHRLKYGAVSGLDHAPLPRWPLDAPDMALPESTTP.

Fe cation contacts are provided by His-122 and His-126. Substrate is bound by residues 153–157, Asp-186, Gly-199, and Asn-298; that span reads LLSGG. Asp-326 is a binding site for Fe cation.

Belongs to the KAE1 / TsaD family. Fe(2+) is required as a cofactor.

It localises to the cytoplasm. The catalysed reaction is L-threonylcarbamoyladenylate + adenosine(37) in tRNA = N(6)-L-threonylcarbamoyladenosine(37) in tRNA + AMP + H(+). Required for the formation of a threonylcarbamoyl group on adenosine at position 37 (t(6)A37) in tRNAs that read codons beginning with adenine. Is involved in the transfer of the threonylcarbamoyl moiety of threonylcarbamoyl-AMP (TC-AMP) to the N6 group of A37, together with TsaE and TsaB. TsaD likely plays a direct catalytic role in this reaction. The sequence is that of tRNA N6-adenosine threonylcarbamoyltransferase from Granulibacter bethesdensis (strain ATCC BAA-1260 / CGDNIH1).